We begin with the raw amino-acid sequence, 368 residues long: Quinolinate synthase (368 aa).

Positions 46 and 63 each coordinate iminosuccinate. [4Fe-4S] cluster is bound at residue Cys-110. Residues 141-143 and Ser-162 each bind iminosuccinate; that span reads YVN. A [4Fe-4S] cluster-binding site is contributed by Cys-230. Iminosuccinate-binding positions include 256-258 and Thr-273; that span reads HPE. Cys-320 lines the [4Fe-4S] cluster pocket.

It belongs to the quinolinate synthase family. Type 3 subfamily. [4Fe-4S] cluster is required as a cofactor.

The protein localises to the cytoplasm. The catalysed reaction is iminosuccinate + dihydroxyacetone phosphate = quinolinate + phosphate + 2 H2O + H(+). It functions in the pathway cofactor biosynthesis; NAD(+) biosynthesis; quinolinate from iminoaspartate: step 1/1. Catalyzes the condensation of iminoaspartate with dihydroxyacetone phosphate to form quinolinate. This Bacillus mycoides (strain KBAB4) (Bacillus weihenstephanensis) protein is Quinolinate synthase.